The sequence spans 458 residues: DNA repair protein RadA (458 aa).

The segment at 10-27 (CQSCGYESPKWMGKCPGC) adopts a C4-type zinc-finger fold. 98 to 105 (GDPGIGKS) provides a ligand contact to ATP. The RadA KNRFG motif signature appears at 255 to 259 (KNRFG). The lon-protease-like stretch occupies residues 354–458 (DAYLKVAGGV…AEALRTSLGG (105 aa)).

Belongs to the RecA family. RadA subfamily. In terms of assembly, interacts with DisA.

Functionally, DNA-dependent ATPase involved in processing of recombination intermediates, plays a role in repairing DNA breaks. Stimulates the branch migration of RecA-mediated strand transfer reactions, allowing the 3' invading strand to extend heteroduplex DNA faster. Binds ssDNA in the presence of ADP but not other nucleotides, has ATPase activity that is stimulated by ssDNA and various branched DNA structures, but inhibited by SSB. Does not have RecA's homology-searching function. In terms of biological role, plays a role in DNA repair. Might stabilize or process Holliday junction intermediates. May work with DisA following methyl methanesulfonate (MMS) but not H(2)O(2) damage; DisA is a DNA integrity scanning protein with c-di-AMP synthase activity. The chain is DNA repair protein RadA from Bacillus subtilis (strain 168).